The following is a 610-amino-acid chain: MSKIIGIDLGTTNSCVTVLEGDEPKVIQNPEGSRTTPSVVAFKNGETQVGEVAKRQAITNPNTVQSIKRHMGTDYKVDIEGKSYTPQEISAMILQNLKNTAESYLGEKVDKAVITVPAYFNDAERQATKDAGKIAGLEVERIINEPTAAALAYGLDKTDKDEKVLVFDLGGGTFDVSILELGDGVFEVLSTAGDNKLGGDDFDQVIIDYLVAEFKKENGVDLSQDKMALQRLKDAAEKAKKDLSGVSQTQISLPFISAGENGPLHLEVNLTRSKFEELSDSLIRRTMGPTRQAMKDAGLTNSDIDEVILVGGSTRIPAVQEAVKKEIGKETNKGVNPDEVVAMGAAIQGGVITGDVKDVVLLDVTPLSLGIEILGGRMNTLIERNTTIPTSKSQIYSTAVDNQPSVDVHVLQGERPMAADNKTLGRFQLTDIPPAERGKPQIEVTFDIDKNGIVNVTAKDLGTNKEQRITIQSSSSLSDEEIDRMVKDAEVNAEADKKRREEVDLRNEADSLVFQVEKTLTDLGENIGEEDKKSAEEKKDALKTALEGQDIEDIKSKKEELEKVIQELSAKVYEQVAQQQQQAQGANAGQNNDSTVEDAEFKEVKDDDKK.

Residue Thr-173 is modified to Phosphothreonine; by autocatalysis. Low complexity predominate over residues 579–592 (QQQQAQGANAGQNN). A disordered region spans residues 579–610 (QQQQAQGANAGQNNDSTVEDAEFKEVKDDDKK). Positions 599 to 610 (AEFKEVKDDDKK) are enriched in basic and acidic residues.

The protein belongs to the heat shock protein 70 family.

Its function is as follows. Acts as a chaperone. This Staphylococcus aureus (strain bovine RF122 / ET3-1) protein is Chaperone protein DnaK.